The chain runs to 156 residues: Ribosomal RNA large subunit methyltransferase H (156 aa).

Residues Leu-73, Gly-104, and Leu-123 to Leu-128 each bind S-adenosyl-L-methionine.

This sequence belongs to the RNA methyltransferase RlmH family. As to quaternary structure, homodimer.

It localises to the cytoplasm. It catalyses the reaction pseudouridine(1915) in 23S rRNA + S-adenosyl-L-methionine = N(3)-methylpseudouridine(1915) in 23S rRNA + S-adenosyl-L-homocysteine + H(+). Functionally, specifically methylates the pseudouridine at position 1915 (m3Psi1915) in 23S rRNA. This is Ribosomal RNA large subunit methyltransferase H from Shewanella baltica (strain OS223).